Consider the following 129-residue polypeptide: Ribulose bisphosphate carboxylase small subunit (129 aa).

The segment at 109-129 (LRMTRTESNGRSQHYMWETQR) is disordered.

Belongs to the RuBisCO small chain family. As to quaternary structure, heterohexadecamer of 8 large and 8 small subunits.

Functionally, ruBisCO catalyzes two reactions: the carboxylation of D-ribulose 1,5-bisphosphate, the primary event in carbon dioxide fixation, as well as the oxidative fragmentation of the pentose substrate. Both reactions occur simultaneously and in competition at the same active site. Although the small subunit is not catalytic it is essential for maximal activity. The polypeptide is Ribulose bisphosphate carboxylase small subunit (Rhizobium meliloti (strain 1021) (Ensifer meliloti)).